The primary structure comprises 295 residues: Energy-coupling factor transporter ATP-binding protein EcfA2 (295 aa).

An ABC transporter domain is found at Ile3–Gly246. ATP is bound at residue Gly40–Ser47.

It belongs to the ABC transporter superfamily. Energy-coupling factor EcfA family. Forms a stable energy-coupling factor (ECF) transporter complex composed of 2 membrane-embedded substrate-binding proteins (S component), 2 ATP-binding proteins (A component) and 2 transmembrane proteins (T component).

The protein localises to the cell membrane. Its function is as follows. ATP-binding (A) component of a common energy-coupling factor (ECF) ABC-transporter complex. Unlike classic ABC transporters this ECF transporter provides the energy necessary to transport a number of different substrates. This is Energy-coupling factor transporter ATP-binding protein EcfA2 from Lactiplantibacillus plantarum (strain ATCC BAA-793 / NCIMB 8826 / WCFS1) (Lactobacillus plantarum).